The sequence spans 478 residues: tRNA(Ile)-lysidine synthase (478 aa).

Residue 27–32 (SGGSDS) participates in ATP binding.

Belongs to the tRNA(Ile)-lysidine synthase family.

It is found in the cytoplasm. The catalysed reaction is cytidine(34) in tRNA(Ile2) + L-lysine + ATP = lysidine(34) in tRNA(Ile2) + AMP + diphosphate + H(+). Functionally, ligates lysine onto the cytidine present at position 34 of the AUA codon-specific tRNA(Ile) that contains the anticodon CAU, in an ATP-dependent manner. Cytidine is converted to lysidine, thus changing the amino acid specificity of the tRNA from methionine to isoleucine. This chain is tRNA(Ile)-lysidine synthase, found in Rickettsia africae (strain ESF-5).